The primary structure comprises 315 residues: Protein MFI (315 aa).

Can homodimerize. Interacts with MFF; the interaction inhibits MFF interaction with DNM1L. Enriched in the pancreatic beta cell and the testis and is expressed at low levels in other tissues tested.

It localises to the cytoplasm. The protein localises to the cytosol. The protein resides in the mitochondrion outer membrane. Acts as an inhibitor of mitochondrial fission. Interacts with MFF and prevents DNM1L recruitment to mitochondria, promoting a more fused mitochondrial network. In Mus musculus (Mouse), this protein is Protein MFI.